A 459-amino-acid polypeptide reads, in one-letter code: Cysteine--tRNA ligase (459 aa).

A Zn(2+)-binding site is contributed by C28. A 'HIGH' region motif is present at residues 30–40 (MTVYDFCHLGH). C209, H234, and E238 together coordinate Zn(2+). A 'KMSKS' region motif is present at residues 266–270 (KMAKS). An ATP-binding site is contributed by K269. The disordered stretch occupies residues 440–459 (QARGIELEDTPEGTKWRRTR).

Belongs to the class-I aminoacyl-tRNA synthetase family. As to quaternary structure, monomer. Zn(2+) serves as cofactor.

Its subcellular location is the cytoplasm. It catalyses the reaction tRNA(Cys) + L-cysteine + ATP = L-cysteinyl-tRNA(Cys) + AMP + diphosphate. The protein is Cysteine--tRNA ligase of Halorhodospira halophila (strain DSM 244 / SL1) (Ectothiorhodospira halophila (strain DSM 244 / SL1)).